The sequence spans 348 residues: Dihydroorotate dehydrogenase (quinone) (348 aa).

FMN is bound by residues 60 to 64 (AGFDK) and T84. Position 64 (K64) interacts with substrate. 109-113 (NRLGF) lines the substrate pocket. FMN contacts are provided by N138 and N169. Substrate is bound at residue N169. Residue S172 is the Nucleophile of the active site. Residue N174 participates in substrate binding. Residues K207 and S235 each coordinate FMN. Residue 236–237 (NT) coordinates substrate. Residues G258, G287, and 308-309 (YS) each bind FMN.

The protein belongs to the dihydroorotate dehydrogenase family. Type 2 subfamily. Monomer. It depends on FMN as a cofactor.

Its subcellular location is the cell membrane. The enzyme catalyses (S)-dihydroorotate + a quinone = orotate + a quinol. It participates in pyrimidine metabolism; UMP biosynthesis via de novo pathway; orotate from (S)-dihydroorotate (quinone route): step 1/1. Catalyzes the conversion of dihydroorotate to orotate with quinone as electron acceptor. The polypeptide is Dihydroorotate dehydrogenase (quinone) (Parvibaculum lavamentivorans (strain DS-1 / DSM 13023 / NCIMB 13966)).